A 269-amino-acid chain; its full sequence is Tryptophan synthase alpha chain (269 aa).

Residues Glu49 and Asp60 each act as proton acceptor in the active site.

It belongs to the TrpA family. In terms of assembly, tetramer of two alpha and two beta chains.

It carries out the reaction (1S,2R)-1-C-(indol-3-yl)glycerol 3-phosphate + L-serine = D-glyceraldehyde 3-phosphate + L-tryptophan + H2O. Its pathway is amino-acid biosynthesis; L-tryptophan biosynthesis; L-tryptophan from chorismate: step 5/5. Its function is as follows. The alpha subunit is responsible for the aldol cleavage of indoleglycerol phosphate to indole and glyceraldehyde 3-phosphate. This is Tryptophan synthase alpha chain from Actinobacillus succinogenes (strain ATCC 55618 / DSM 22257 / CCUG 43843 / 130Z).